The sequence spans 262 residues: MQQPIIGVGHSMGGCQIATLSVTSRRIFSTMILLDPAIGPPEMGLATLGLGQLTLRRRTQWLTREDAEKALRTSFSTWDPQVLDLLIKHSIHSDKQSVEMEDGPFSLVTGRYQELVNYIKPSFIRSGKVVGQELVHQTGPVDMYHMLGLVTCSTLYLCGGESTLSTPRARELWLSRTAELSYPKDPGEMRKVDERIVPDTGHFLPMEEPKECADIIADWIDKDECMIWNCHIGKQGKIWRDLSNTNRKMNAEVWMKYLQSKL.

The Peroxisomal targeting signal type 1 motif lies at 260–262; that stretch reads SKL.

This sequence belongs to the AB hydrolase superfamily. AKT2 hydrolase family.

Its subcellular location is the peroxisome. Its pathway is mycotoxin biosynthesis. Its function is as follows. Abhydrolase domain-containing protein; part of the gene clusters that mediate the biosynthesis of the host-selective toxins (HSTs) ACT-toxins responsible for brown spot of tangerine disease by the tangerine pathotype which affects tangerines and mandarins. ACT-toxins consist of three moieties, 9,10-epoxy-8-hydroxy-9-methyl-decatrienoic acid (EDA), valine and a polyketide. ACT-toxin I is toxic to both citrus and pear; toxin II the 5''-deoxy derivative of ACT-toxin I, is highly toxic to pear and slightly toxic to citrus. On cellular level, ACT-toxins affect plasma membrane of susceptible cells and cause a sudden increase in loss of K(+) after a few minutes of toxin treatment. The acyl-CoA ligase ACTT1, the hydrolase ACTT2, the enoyl-CoA hydratases ACTT3 and ACTT6, and the acyl-CoA synthetase ACTT5 are all involved in the biosynthesis of the AK-, AF- and ACT-toxin common 9,10-epoxy-8-hydroxy-9-methyl-decatrienoic acid (EDA) structural moiety. The exact role of each enzyme, and of additional enzymes identified within the AF-toxin clusters have still to be determined. On the other hand, ACTTS1 to ACTTS4 are specific to the tangerine pathotype. The function of ACTTS3 is to elongate the polyketide chain portion of ACT-toxin that is unique to this toxin. The enoyl-reductase ACTTS2 might complement the missing enoyl-reductase (ER) domain in ACTTS3 in the synthesis of the polyketide portion of ACT-toxin. The roles of the nonribosomal peptide synthetases-related proteins ACTTS1 and ACTTS4 have also still not been elucidated. The chain is Abhydrolase domain-containing protein ACTT2 from Alternaria alternata (Alternaria rot fungus).